The sequence spans 195 residues: Probable GTP-binding protein EngB (195 aa).

One can recognise an EngB-type G domain in the interval 24-195 (ELPEIALAGR…EAWDAILEKL (172 aa)). Residues 32–39 (GRSNVGKS), 59–63 (GKTQL), 77–80 (DVPG), 144–147 (TKAD), and 176–178 (FSS) each bind GTP. Mg(2+) contacts are provided by Ser39 and Thr61.

This sequence belongs to the TRAFAC class TrmE-Era-EngA-EngB-Septin-like GTPase superfamily. EngB GTPase family. Mg(2+) is required as a cofactor.

In terms of biological role, necessary for normal cell division and for the maintenance of normal septation. This is Probable GTP-binding protein EngB from Streptococcus pneumoniae (strain ATCC 700669 / Spain 23F-1).